Consider the following 290-residue polypeptide: Ribosomal RNA small subunit methyltransferase A (290 aa).

6 residues coordinate S-adenosyl-L-methionine: Asn27, Leu29, Gly54, Glu75, Asp100, and Asn125.

Belongs to the class I-like SAM-binding methyltransferase superfamily. rRNA adenine N(6)-methyltransferase family. RsmA subfamily.

It is found in the cytoplasm. The enzyme catalyses adenosine(1518)/adenosine(1519) in 16S rRNA + 4 S-adenosyl-L-methionine = N(6)-dimethyladenosine(1518)/N(6)-dimethyladenosine(1519) in 16S rRNA + 4 S-adenosyl-L-homocysteine + 4 H(+). Specifically dimethylates two adjacent adenosines (A1518 and A1519) in the loop of a conserved hairpin near the 3'-end of 16S rRNA in the 30S particle. May play a critical role in biogenesis of 30S subunits. The chain is Ribosomal RNA small subunit methyltransferase A from Streptococcus pneumoniae (strain ATCC 700669 / Spain 23F-1).